The primary structure comprises 189 residues: Marginal zone B- and B1-cell-specific protein (189 aa).

A signal peptide spans 1–22 (MRLSLPLLLLLLGAWAIPGGLG). 3 disulfides stabilise this stretch: cysteine 50-cysteine 178, cysteine 53-cysteine 171, and cysteine 95-cysteine 143. The Prevents secretion from ER signature appears at 186–189 (REEL).

It belongs to the MZB1 family. Part of the ER chaperone complex, a multi-protein complex in the endoplasmic reticulum containing a large number of molecular chaperones which associates with unassembled incompletely folded immunoglobulin heavy chains. Isoform 2 interacts with CASP2 and CASP9. Interacts with HSP90B1 and PDIA3 in a calcium-dependent manner. Post-translationally, forms an interchain disulfide bond with IgM monomers. Widely expressed with highest levels in adult brain, small intestine and lymphoid tissues such as thymus and spleen. Expression is frequently lower in intestinal-type gastric cancer. In obese patients, more abundant in omental than in subcutaneous fat.

It is found in the endoplasmic reticulum lumen. It localises to the secreted. Its subcellular location is the cytoplasm. Its function is as follows. Associates with immunoglobulin M (IgM) heavy and light chains and promotes IgM assembly and secretion. May exert its effect by acting as a molecular chaperone or as an oxidoreductase as it displays a low level of oxidoreductase activity. Isoform 2 may be involved in regulation of apoptosis. Helps to diversify peripheral B-cell functions by regulating Ca(2+) stores, antibody secretion and integrin activation. Acts as a hormone-regulated adipokine/pro-inflammatory cytokine that is implicated in causing chronic inflammation, affecting cellular expansion and blunting insulin response in adipocytes. May have a role in the onset of insulin resistance. In Homo sapiens (Human), this protein is Marginal zone B- and B1-cell-specific protein (MZB1).